Consider the following 312-residue polypeptide: Bifunctional pinoresinol-lariciresinol reductase 1 (312 aa).

Residues 10–16 (GGTGYIG), Arg35, and Lys44 each bind NADP(+). Catalysis depends on Lys136, which acts as the Proton acceptor. Arg140 serves as a coordination point for NADP(+). His268 contributes to the substrate binding site.

Belongs to the NmrA-type oxidoreductase family. Isoflavone reductase subfamily. In terms of assembly, dimer. Expressed in seeds and roots, but not in stems. Detected in leaves.

It carries out the reaction (-)-lariciresinol + NADP(+) = (-)-pinoresinol + NADPH + H(+). It catalyses the reaction (+)-secoisolariciresinol + NADP(+) = (-)-lariciresinol + NADPH + H(+). Its function is as follows. Reductase involved in lignan biosynthesis. Catalyzes the enantioselective conversion of (-)-pinoresinol into (-)-lariciresinol and of (-)-lariciresinol into (+)-secoisolariciresinol. Abstracts the 4R-hydride from the NADPH cofactor during catalysis. This chain is Bifunctional pinoresinol-lariciresinol reductase 1 (PLR_Lu1), found in Linum usitatissimum (Flax).